A 215-amino-acid chain; its full sequence is Orotate phosphoribosyltransferase (215 aa).

5-phospho-alpha-D-ribose 1-diphosphate is bound at residue Lys25. Position 33-34 (33-34 (FF)) interacts with orotate. 5-phospho-alpha-D-ribose 1-diphosphate contacts are provided by residues 71-72 (YK), Arg98, Lys99, Lys102, His104, and 124-132 (DDVITAGTA). Positions 128 and 156 each coordinate orotate.

This sequence belongs to the purine/pyrimidine phosphoribosyltransferase family. PyrE subfamily. Homodimer.

The enzyme catalyses orotidine 5'-phosphate + diphosphate = orotate + 5-phospho-alpha-D-ribose 1-diphosphate. It functions in the pathway pyrimidine metabolism; UMP biosynthesis via de novo pathway; UMP from orotate: step 1/2. Its function is as follows. Catalyzes the transfer of a ribosyl phosphate group from 5-phosphoribose 1-diphosphate to orotate, leading to the formation of orotidine monophosphate (OMP). The sequence is that of Orotate phosphoribosyltransferase (ura5) from Schizosaccharomyces pombe (strain 972 / ATCC 24843) (Fission yeast).